We begin with the raw amino-acid sequence, 76 residues long: MEGLNLVATALAVGLGAIGPGVGIGIIVSGAVQAIGRNPEIENRVVTYMFIGIAFTEALAIFGLVIAFLIGFGVLQ.

The next 2 helical transmembrane spans lie at 7-27 (VATA…IGII) and 50-70 (FIGI…AFLI).

It belongs to the ATPase C chain family. F-type ATPases have 2 components, F(1) - the catalytic core - and F(0) - the membrane proton channel. F(1) has five subunits: alpha(3), beta(3), gamma(1), delta(1), epsilon(1). F(0) has four main subunits: a(1), b(1), b'(1) and c(10-14). The alpha and beta chains form an alternating ring which encloses part of the gamma chain. F(1) is attached to F(0) by a central stalk formed by the gamma and epsilon chains, while a peripheral stalk is formed by the delta, b and b' chains.

It localises to the cell membrane. F(1)F(0) ATP synthase produces ATP from ADP in the presence of a proton or sodium gradient. F-type ATPases consist of two structural domains, F(1) containing the extramembraneous catalytic core and F(0) containing the membrane proton channel, linked together by a central stalk and a peripheral stalk. During catalysis, ATP synthesis in the catalytic domain of F(1) is coupled via a rotary mechanism of the central stalk subunits to proton translocation. In terms of biological role, key component of the F(0) channel; it plays a direct role in translocation across the membrane. A homomeric c-ring of between 10-14 subunits forms the central stalk rotor element with the F(1) delta and epsilon subunits. This chain is ATP synthase subunit c, found in Chloroflexus aurantiacus (strain ATCC 29366 / DSM 635 / J-10-fl).